A 181-amino-acid chain; its full sequence is Iron sulfur cluster assembly protein 1, mitochondrial (181 aa).

Positions 159–181 (RKTKNPTLGAEAAETPAAATATA) are disordered. A compositionally biased stretch (low complexity) spans 168–181 (AEAAETPAAATATA).

Belongs to the NifU family. As to quaternary structure, component of the core Fe-S cluster (ISC) assembly machinery. [2Fe-2S] cluster serves as cofactor.

The protein resides in the mitochondrion matrix. Its pathway is cofactor biosynthesis; iron-sulfur cluster biosynthesis. In terms of biological role, scaffold protein for the de novo synthesis of iron-sulfur (Fe-S) clusters within mitochondria, which is required for maturation of both mitochondrial and cytoplasmic [2Fe-2S] and [4Fe-4S] proteins. First, a [2Fe-2S] cluster is transiently assembled on the scaffold protein ISU1. In a second step, the cluster is released from ISU1, transferred to a glutaredoxin, followed by the formation of mitochondrial [2Fe-2S] proteins, the synthesis of [4Fe-4S] clusters and their target-specific insertion into the recipient apoproteins. Cluster assembly on ISU1 depends on the function of the cysteine desulfurase complex NFS1-ISD11, which serves as the sulfur donor for cluster synthesis, the iron-binding protein frataxin as the putative iron donor, and the electron transfer chain comprised of ferredoxin reductase and ferredoxin, which receive their electrons from NADH. This chain is Iron sulfur cluster assembly protein 1, mitochondrial (ISU1), found in Yarrowia lipolytica (strain CLIB 122 / E 150) (Yeast).